The chain runs to 283 residues: MSRSPIVARTLPALRRALDTIRARKASVALVPTMGALHEGHLALVRLAKRRASKVVVSIFVNPAQFAPNEDFASYPRTWKADLAKLAAEKVDLVWNPDAKTMYPAGFASKIITEGPALVGLEDRFRPQFFGGVTTVVGKLFAQVRPDFALFGEKDFQQLRVVTRMARDLDLGAKVIGVPTMRERDGLAMSSRNVYLSPEHRSAAPTLYRSLKEAAKRLRAGDDIDVALGGGAEMITAAGFKLDYLEARHAETLEPIASLEDGPIRLLVAARIGSTRLIDNVAV.

34–41 lines the ATP pocket; it reads MGALHEGH. Residue His41 is the Proton donor of the active site. Residue Gln65 participates in (R)-pantoate binding. Gln65 is a beta-alanine binding site. 152 to 155 is a binding site for ATP; that stretch reads GEKD. Gln158 is a binding site for (R)-pantoate. 189–192 is an ATP binding site; sequence MSSR.

Belongs to the pantothenate synthetase family. As to quaternary structure, homodimer.

It localises to the cytoplasm. The catalysed reaction is (R)-pantoate + beta-alanine + ATP = (R)-pantothenate + AMP + diphosphate + H(+). Its pathway is cofactor biosynthesis; (R)-pantothenate biosynthesis; (R)-pantothenate from (R)-pantoate and beta-alanine: step 1/1. Its function is as follows. Catalyzes the condensation of pantoate with beta-alanine in an ATP-dependent reaction via a pantoyl-adenylate intermediate. This Rhodopseudomonas palustris (strain BisA53) protein is Pantothenate synthetase.